Consider the following 324-residue polypeptide: Beta-ketoacyl-[acyl-carrier-protein] synthase III (324 aa).

Residues cysteine 112 and histidine 249 contribute to the active site. Residues 250 to 254 are ACP-binding; sequence QANRR. Asparagine 279 is a catalytic residue.

This sequence belongs to the thiolase-like superfamily. FabH family. Homodimer.

Its subcellular location is the cytoplasm. The catalysed reaction is malonyl-[ACP] + acetyl-CoA + H(+) = 3-oxobutanoyl-[ACP] + CO2 + CoA. It participates in lipid metabolism; fatty acid biosynthesis. Catalyzes the condensation reaction of fatty acid synthesis by the addition to an acyl acceptor of two carbons from malonyl-ACP. Catalyzes the first condensation reaction which initiates fatty acid synthesis and may therefore play a role in governing the total rate of fatty acid production. Possesses both acetoacetyl-ACP synthase and acetyl transacylase activities. Its substrate specificity determines the biosynthesis of branched-chain and/or straight-chain of fatty acids. The chain is Beta-ketoacyl-[acyl-carrier-protein] synthase III from Streptococcus pyogenes serotype M4 (strain MGAS10750).